We begin with the raw amino-acid sequence, 192 residues long: Thiol-disulfide oxidoreductase ResA (192 aa).

Residues S22–K41 traverse the membrane as a helical; Signal-anchor for type II membrane protein segment. The Thioredoxin domain maps to Y47–P189. An intrachain disulfide couples C89 to C92.

The protein belongs to the thioredoxin family. ResA subfamily.

The protein localises to the cell membrane. The protein operates within protein modification; cytochrome c assembly. Thiol-disulfide oxidoreductase which is required in disulfide reduction during c-type cytochrome synthesis. May accept reducing equivalents from CcdA, leading to breakage of disulfide bonds in apocytochrome c; following this reduction heme can be covalently attached. In Oceanobacillus iheyensis (strain DSM 14371 / CIP 107618 / JCM 11309 / KCTC 3954 / HTE831), this protein is Thiol-disulfide oxidoreductase ResA.